We begin with the raw amino-acid sequence, 686 residues long: Phosphomethylpyrimidine synthase (686 aa).

Residues asparagine 235, methionine 264, tyrosine 293, histidine 329, 349–351, 390–393, and glutamate 429 each bind substrate; these read SRG and DGMR. Histidine 433 is a binding site for Zn(2+). Tyrosine 456 provides a ligand contact to substrate. Residue histidine 497 participates in Zn(2+) binding. The [4Fe-4S] cluster site is built by cysteine 577, cysteine 580, and cysteine 585. Residues 659-686 form a disordered region; it reads IDSSGINDNKNDQQDASVVRVPSLEIEG.

Belongs to the ThiC family. As to quaternary structure, homodimer. The cofactor is [4Fe-4S] cluster.

The enzyme catalyses 5-amino-1-(5-phospho-beta-D-ribosyl)imidazole + S-adenosyl-L-methionine = 4-amino-2-methyl-5-(phosphooxymethyl)pyrimidine + CO + 5'-deoxyadenosine + formate + L-methionine + 3 H(+). Its pathway is cofactor biosynthesis; thiamine diphosphate biosynthesis. Catalyzes the synthesis of the hydroxymethylpyrimidine phosphate (HMP-P) moiety of thiamine from aminoimidazole ribotide (AIR) in a radical S-adenosyl-L-methionine (SAM)-dependent reaction. The sequence is that of Phosphomethylpyrimidine synthase from Shewanella denitrificans (strain OS217 / ATCC BAA-1090 / DSM 15013).